Reading from the N-terminus, the 88-residue chain is MIDKKQKQKIVSEFGKNESDTGSVGVQIALITGRIKYLTEHLKINKKDHSSKRGLLKLVGQRRSLLRYYQKKDLEAYRMLISKLGLRK.

The protein belongs to the universal ribosomal protein uS15 family. As to quaternary structure, part of the 30S ribosomal subunit. Forms a bridge to the 50S subunit in the 70S ribosome, contacting the 23S rRNA.

One of the primary rRNA binding proteins, it binds directly to 16S rRNA where it helps nucleate assembly of the platform of the 30S subunit by binding and bridging several RNA helices of the 16S rRNA. Functionally, forms an intersubunit bridge (bridge B4) with the 23S rRNA of the 50S subunit in the ribosome. The protein is Small ribosomal subunit protein uS15 of Borreliella burgdorferi (strain ATCC 35210 / DSM 4680 / CIP 102532 / B31) (Borrelia burgdorferi).